Here is a 306-residue protein sequence, read N- to C-terminus: Light-independent protochlorophyllide reductase iron-sulfur ATP-binding protein (306 aa).

The segment at 1–31 (MREAAGLEARGLKSPPILKGQDGEGSLQVHQ) is disordered. ATP-binding positions include 50-55 (GIGKST) and Lys79. Ser54 lines the Mg(2+) pocket. [4Fe-4S] cluster contacts are provided by Cys135 and Cys169. 220–221 (NR) contributes to the ATP binding site.

Belongs to the NifH/BchL/ChlL family. Homodimer. Protochlorophyllide reductase is composed of three subunits; BchL, BchN and BchB. It depends on [4Fe-4S] cluster as a cofactor.

The catalysed reaction is chlorophyllide a + oxidized 2[4Fe-4S]-[ferredoxin] + 2 ADP + 2 phosphate = protochlorophyllide a + reduced 2[4Fe-4S]-[ferredoxin] + 2 ATP + 2 H2O. Its pathway is porphyrin-containing compound metabolism; bacteriochlorophyll biosynthesis (light-independent). Functionally, component of the dark-operative protochlorophyllide reductase (DPOR) that uses Mg-ATP and reduced ferredoxin to reduce ring D of protochlorophyllide (Pchlide) to form chlorophyllide a (Chlide). This reaction is light-independent. The L component serves as a unique electron donor to the NB-component of the complex, and binds Mg-ATP. This Jannaschia sp. (strain CCS1) protein is Light-independent protochlorophyllide reductase iron-sulfur ATP-binding protein.